The sequence spans 463 residues: MAGAGERKGKKDDNGIGTAIDFVLSNARLVLGVGGAAMLGIATLAVKRMYDRAISAPTSPTRLSHSGKRSWEEPNWMGSPQLLNRDMKTGLSRSLQTLPTDSSAFDTDTFCPPRPKPVARKGQVDLKKSRLRMSLQEKLLPYYRNRAAIPAGEQARAKQAAVDICAELRSFLRAKLPDMPLRDVYLSGSLYDDLQVVTADHIQLIVPLVLEQNLWSCIPGEDTIMNVPGFFLVRRENPEYFPRGSSYWDRCVVGGYLSPKTVADTFEKVVAGSINWPAIGSLLDYVIRPAPPPEALTLEVQYERDKHLFIDFLPSVTLGDTVLVAKPHRLAQYDNLWRLSLRPAETARLRALDQADSGCRSLCLKILKAICKSTPALGHLTASQLTNVILHLAQEEADWSPDMLADRFLQALRGLISYLEAGVLPSALNPKVNLFAELTPEEIDELGYTLYCSLSEPEVLLQT.

Residues 1 to 23 (MAGAGERKGKKDDNGIGTAIDFV) lie on the Mitochondrial intermembrane side of the membrane. A helical transmembrane segment spans residues 24-46 (LSNARLVLGVGGAAMLGIATLAV). At 47–463 (KRMYDRAISA…LSEPEVLLQT (417 aa)) the chain is on the cytoplasmic side. The interval 49 to 195 (MYDRAISAPT…LSGSLYDDLQ (147 aa)) is dimerization. Phosphoserine occurs at positions 55, 59, 79, and 94. Residues 57-79 (PTSPTRLSHSGKRSWEEPNWMGS) are disordered. The interval 104–123 (AFDTDTFCPPRPKPVARKGQ) is disordered. The interval 160–169 (AAVDICAELR) is important for interaction with DNM1L. Residues serine 187, serine 189, and histidine 201 each contribute to the ADP site. Positions 234–243 (RRENPEYFPR) are important for interaction with DNM1L. The ADP site is built by serine 340, arginine 342, and lysine 368.

Belongs to the MID49/MID51 family. As to quaternary structure, homodimer. Interacts with DNM1L.

The protein localises to the mitochondrion outer membrane. In terms of biological role, mitochondrial outer membrane protein which regulates mitochondrial fission/fusion dynamics. Promotes the recruitment and association of the fission mediator dynamin-related protein 1 (DNM1L) to the mitochondrial surface independently of the mitochondrial fission FIS1 and MFF proteins. Regulates DNM1L GTPase activity and DNM1L oligomerization. Binds ADP and can also bind GDP, although with lower affinity. Does not bind CDP, UDP, ATP, AMP or GTP. Inhibits DNM1L GTPase activity in the absence of bound ADP. Requires ADP to stimulate DNM1L GTPase activity and the assembly of DNM1L into long, oligomeric tubules with a spiral pattern, as opposed to the ring-like DNM1L oligomers observed in the absence of bound ADP. Does not require ADP for its function in recruiting DNM1L. In Pongo abelii (Sumatran orangutan), this protein is Mitochondrial dynamics protein MID51 (MIEF1).